A 290-amino-acid chain; its full sequence is Undecaprenyl-diphosphatase (290 aa).

8 helical membrane passes run 5 to 25 (IGIF…YFPI), 44 to 64 (GTAY…TYFY), 88 to 108 (VRLF…GLAL), 122 to 142 (LSVI…SESL), 152 to 172 (IRVI…VPGV), 195 to 215 (FSFL…LKVL), 226 to 246 (PIVA…AWLL), and 255 to 275 (LVFV…LAAG).

This sequence belongs to the UppP family.

It is found in the cell inner membrane. The catalysed reaction is di-trans,octa-cis-undecaprenyl diphosphate + H2O = di-trans,octa-cis-undecaprenyl phosphate + phosphate + H(+). Catalyzes the dephosphorylation of undecaprenyl diphosphate (UPP). Confers resistance to bacitracin. The polypeptide is Undecaprenyl-diphosphatase (Gloeobacter violaceus (strain ATCC 29082 / PCC 7421)).